Consider the following 317-residue polypeptide: Melanocyte-stimulating hormone receptor (317 aa).

At M1–E37 the chain is on the extracellular side. An N-linked (GlcNAc...) asparagine glycan is attached at N29. A helical membrane pass occupies residues V38–I63. The Cytoplasmic segment spans residues A64–P72. The helical transmembrane segment at M73–L93 threads the bilayer. Over E94–N118 the chain is Extracellular. A helical transmembrane segment spans residues V119–V140. Residues D141–R163 are Cytoplasmic-facing. A helical transmembrane segment spans residues A164–Y183. Over D184–C191 the chain is Extracellular. A helical membrane pass occupies residues L192–L211. The Cytoplasmic portion of the chain corresponds to A212–A240. The chain crosses the membrane as a helical span at residues A241 to L266. The Extracellular portion of the chain corresponds to C267 to N279. Residues F280 to F300 form a helical membrane-spanning segment. Residues R301–W317 lie on the Cytoplasmic side of the membrane. A lipid anchor (S-palmitoyl cysteine) is attached at C315.

It belongs to the G-protein coupled receptor 1 family. Interacts with MGRN1, but does not undergo MGRN1-mediated ubiquitination; this interaction competes with GNAS-binding and thus inhibits agonist-induced cAMP production. Interacts with OPN3; the interaction results in a decrease in MC1R-mediated cAMP signaling and ultimately a decrease in melanin production in melanocytes. As to expression, expressed in the adrenal gland.

Its subcellular location is the cell membrane. Its function is as follows. Receptor for MSH (alpha, beta and gamma) and ACTH. The activity of this receptor is mediated by G proteins which activate adenylate cyclase. Mediates melanogenesis, the production of eumelanin (black/brown) and phaeomelanin (red/yellow), via regulation of cAMP signaling in melanocytes. The polypeptide is Melanocyte-stimulating hormone receptor (MC1R) (Macaca mulatta (Rhesus macaque)).